We begin with the raw amino-acid sequence, 734 residues long: Photosystem I P700 chlorophyll a apoprotein A2 (734 aa).

8 consecutive transmembrane segments (helical) span residues 46–69, 135–158, 175–199, 273–291, 330–353, 369–395, 417–439, and 517–535; these read IFASHFGQLAVIFLWTSGNLFHVA, LYRGALFLLFLSTLALLAGWLHLQ, LNHHLSGLFGVSSLAWSGHLVHVAI, IAHHHLAIAILFIVAGHMY, LHFQLGLALASLGVITSLVAQHMY, AALYTHHQYIAGFIMVGAFAHGAIFFI, AIISHLSWASLFLGFHTLGLYVH, and FLVHHAIALGLHTTTLILV. 2 residues coordinate [4Fe-4S] cluster: C559 and C568. 2 consecutive transmembrane segments (helical) span residues 575–596 and 643–665; these read AFYLAVFWMLNTIGWVTFYWHW and LSVWAWMFLFGHLIWATGFMFLI. H654, M662, and Y670 together coordinate chlorophyll a. W671 contributes to the phylloquinone binding site. The helical transmembrane segment at 707 to 727 threads the bilayer; it reads LVGLSHFSVGYIFTYAAFLIA.

It belongs to the PsaA/PsaB family. As to quaternary structure, the PsaA/B heterodimer binds the P700 chlorophyll special pair and subsequent electron acceptors. PSI consists of a core antenna complex that captures photons, and an electron transfer chain that converts photonic excitation into a charge separation. The eukaryotic PSI reaction center is composed of at least 11 subunits. The cofactor is P700 is a chlorophyll a/chlorophyll a' dimer, A0 is one or more chlorophyll a, A1 is one or both phylloquinones and FX is a shared 4Fe-4S iron-sulfur center..

It is found in the plastid. The protein localises to the chloroplast thylakoid membrane. The catalysed reaction is reduced [plastocyanin] + hnu + oxidized [2Fe-2S]-[ferredoxin] = oxidized [plastocyanin] + reduced [2Fe-2S]-[ferredoxin]. In terms of biological role, psaA and PsaB bind P700, the primary electron donor of photosystem I (PSI), as well as the electron acceptors A0, A1 and FX. PSI is a plastocyanin-ferredoxin oxidoreductase, converting photonic excitation into a charge separation, which transfers an electron from the donor P700 chlorophyll pair to the spectroscopically characterized acceptors A0, A1, FX, FA and FB in turn. Oxidized P700 is reduced on the lumenal side of the thylakoid membrane by plastocyanin. The chain is Photosystem I P700 chlorophyll a apoprotein A2 from Chara vulgaris (Common stonewort).